The primary structure comprises 65 residues: Large ribosomal subunit protein bL35 (65 aa).

This sequence belongs to the bacterial ribosomal protein bL35 family.

The chain is Large ribosomal subunit protein bL35 from Burkholderia ambifaria (strain MC40-6).